The following is a 257-amino-acid chain: Phosphonates import ATP-binding protein PhnC (257 aa).

The 245-residue stretch at 2-246 (IEFRNVSKVY…KFAEIYGDVA (245 aa)) folds into the ABC transporter domain. Position 35-42 (35-42 (GLSGAGKS)) interacts with ATP.

This sequence belongs to the ABC transporter superfamily. Phosphonates importer (TC 3.A.1.9.1) family. As to quaternary structure, the complex is composed of two ATP-binding proteins (PhnC), two transmembrane proteins (PhnE) and a solute-binding protein (PhnD).

The protein resides in the cell membrane. The enzyme catalyses phosphonate(out) + ATP + H2O = phosphonate(in) + ADP + phosphate + H(+). Part of the ABC transporter complex PhnCDE involved in phosphonates import. Responsible for energy coupling to the transport system. This Bacillus cereus (strain ZK / E33L) protein is Phosphonates import ATP-binding protein PhnC.